A 93-amino-acid chain; its full sequence is Large ribosomal subunit protein bL31 (93 aa).

The tract at residues 72 to 93 is disordered; sequence VKTVSSNADNQKETTEELIKNK. A compositionally biased stretch (basic and acidic residues) spans 81-93; the sequence is NQKETTEELIKNK.

It belongs to the bacterial ribosomal protein bL31 family. Type A subfamily. Part of the 50S ribosomal subunit.

In terms of biological role, binds the 23S rRNA. The chain is Large ribosomal subunit protein bL31 from Onion yellows phytoplasma (strain OY-M).